The chain runs to 334 residues: Glycerol-3-phosphate dehydrogenase [NAD(P)+] (334 aa).

NADPH-binding residues include tryptophan 13, arginine 33, and lysine 106. Sn-glycerol 3-phosphate contacts are provided by lysine 106, glycine 137, and serine 139. Alanine 141 is a binding site for NADPH. The sn-glycerol 3-phosphate site is built by lysine 192, aspartate 245, serine 255, arginine 256, and asparagine 257. Lysine 192 functions as the Proton acceptor in the catalytic mechanism. Arginine 256 contacts NADPH. Residues valine 280 and glutamate 282 each coordinate NADPH.

Belongs to the NAD-dependent glycerol-3-phosphate dehydrogenase family.

Its subcellular location is the cytoplasm. It carries out the reaction sn-glycerol 3-phosphate + NAD(+) = dihydroxyacetone phosphate + NADH + H(+). The enzyme catalyses sn-glycerol 3-phosphate + NADP(+) = dihydroxyacetone phosphate + NADPH + H(+). The protein operates within membrane lipid metabolism; glycerophospholipid metabolism. In terms of biological role, catalyzes the reduction of the glycolytic intermediate dihydroxyacetone phosphate (DHAP) to sn-glycerol 3-phosphate (G3P), the key precursor for phospholipid synthesis. The polypeptide is Glycerol-3-phosphate dehydrogenase [NAD(P)+] (Chlamydia felis (strain Fe/C-56) (Chlamydophila felis)).